The following is a 186-amino-acid chain: Potassium-transporting ATPase KdpC subunit (186 aa).

Residues 10-30 (LTIITMVLCGFLFPLAITLIG) form a helical membrane-spanning segment.

Belongs to the KdpC family. In terms of assembly, the system is composed of three essential subunits: KdpA, KdpB and KdpC.

Its subcellular location is the cell membrane. Functionally, part of the high-affinity ATP-driven potassium transport (or Kdp) system, which catalyzes the hydrolysis of ATP coupled with the electrogenic transport of potassium into the cytoplasm. This subunit acts as a catalytic chaperone that increases the ATP-binding affinity of the ATP-hydrolyzing subunit KdpB by the formation of a transient KdpB/KdpC/ATP ternary complex. This chain is Potassium-transporting ATPase KdpC subunit, found in Staphylococcus aureus (strain COL).